Consider the following 179-residue polypeptide: Large ribosomal subunit protein uL5 (179 aa).

This sequence belongs to the universal ribosomal protein uL5 family. Part of the 50S ribosomal subunit; part of the 5S rRNA/L5/L18/L25 subcomplex. Contacts the 5S rRNA and the P site tRNA. Forms a bridge to the 30S subunit in the 70S ribosome.

Its function is as follows. This is one of the proteins that bind and probably mediate the attachment of the 5S RNA into the large ribosomal subunit, where it forms part of the central protuberance. In the 70S ribosome it contacts protein S13 of the 30S subunit (bridge B1b), connecting the 2 subunits; this bridge is implicated in subunit movement. Contacts the P site tRNA; the 5S rRNA and some of its associated proteins might help stabilize positioning of ribosome-bound tRNAs. This is Large ribosomal subunit protein uL5 from Mannheimia succiniciproducens (strain KCTC 0769BP / MBEL55E).